We begin with the raw amino-acid sequence, 116 residues long: Large ribosomal subunit protein bL17 (116 aa).

This sequence belongs to the bacterial ribosomal protein bL17 family. Part of the 50S ribosomal subunit. Contacts protein L32.

This Fusobacterium nucleatum subsp. nucleatum (strain ATCC 25586 / DSM 15643 / BCRC 10681 / CIP 101130 / JCM 8532 / KCTC 2640 / LMG 13131 / VPI 4355) protein is Large ribosomal subunit protein bL17.